A 444-amino-acid polypeptide reads, in one-letter code: Acyl-CoA 6-desaturase (444 aa).

Residues 1–21 (MGKGGNQGEGSTERQAPMPTF) form a disordered region. The Cytoplasmic segment spans residues 1 to 130 (MGKGGNQGEG…EDMNLFKTNH (130 aa)). The region spanning 18-95 (MPTFRWEEIQ…LKPLLIGELA (78 aa)) is the Cytochrome b5 heme-binding domain. Residues 131 to 151 (LFFFLLLSHIIVMESLAWFIL) traverse the membrane as a helical segment. S152 is a topological domain (lumenal). The chain crosses the membrane as a helical span at residues 153 to 173 (YFGTGWIPTLVTAFVLATSQA). The Cytoplasmic portion of the chain corresponds to 174–264 (QAGWLQHDYG…KYLPYNHQHE (91 aa)). Residues 180-184 (HDYGH) carry the Histidine box-1 motif. The Histidine box-2 motif lies at 217 to 221 (HFQHH). Residues 265-285 (YFFLIGPPLLIPMYFQYQIIM) form a helical membrane-spanning segment. The Lumenal portion of the chain corresponds to 286 to 305 (TMISRRDWVDLAWAISYYMR). Residues 306-326 (FFYTYIPFYGILGALVFLNFI) traverse the membrane as a helical segment. Residues 327–444 (RFLESHWFVW…ELWLDAYLHK (118 aa)) lie on the Cytoplasmic side of the membrane. The Histidine box-3 motif lies at 382–386 (QIEHH).

Belongs to the fatty acid desaturase type 1 family. In terms of tissue distribution, highly expressed in the adrenal gland, liver, brain, and testis, tissues where lipogenesis and steroidogenesis are active. Also detected in lung, heart, and skeletal muscle.

It is found in the endoplasmic reticulum membrane. The enzyme catalyses (9Z,12Z)-octadecadienoyl-CoA + 2 Fe(II)-[cytochrome b5] + O2 + 2 H(+) = (6Z,9Z,12Z)-octadecatrienoyl-CoA + 2 Fe(III)-[cytochrome b5] + 2 H2O. It carries out the reaction (9Z,12Z,15Z)-octadecatrienoyl-CoA + 2 Fe(II)-[cytochrome b5] + O2 + 2 H(+) = (6Z,9Z,12Z,15Z)-octadecatetraenoyl-CoA + 2 Fe(III)-[cytochrome b5] + 2 H2O. It catalyses the reaction (9Z,12Z,15Z,18Z,21Z)-tetracosapentaenoyl-CoA + 2 Fe(II)-[cytochrome b5] + O2 + 2 H(+) = (6Z,9Z,12Z,15Z,18Z,21Z)-tetracosahexaenoyl-CoA + 2 Fe(III)-[cytochrome b5] + 2 H2O. The catalysed reaction is (11E)-octadecenoyl-CoA + 2 Fe(II)-[cytochrome b5] + O2 + 2 H(+) = (6Z,11E)-octadecadienoyl-CoA + 2 Fe(III)-[cytochrome b5] + 2 H2O. The enzyme catalyses (11Z,14Z)-eicosadienoyl-CoA + 2 Fe(II)-[cytochrome b5] + O2 + 2 H(+) = (8Z,11Z,14Z)-eicosatrienoyl-CoA + 2 Fe(III)-[cytochrome b5] + 2 H2O. It carries out the reaction (11Z,14Z,17Z)-eicosatrienoyl-CoA + 2 Fe(II)-[cytochrome b5] + O2 + 2 H(+) = (8Z,11Z,14Z,17Z)-eicosatetraenoyl-CoA + 2 Fe(III)-[cytochrome b5] + 2 H2O. The protein operates within lipid metabolism; polyunsaturated fatty acid biosynthesis. Functionally, involved in the biosynthesis of highly unsaturated fatty acids (HUFA) from the essential polyunsaturated fatty acids (PUFA) linoleic acid (LA) (18:2n-6) and alpha-linolenic acid (ALA) (18:3n-3) precursors, acting as a fatty acyl-coenzyme A (CoA) desaturase that introduces a cis double bond at carbon 6 of the fatty acyl chain. Catalyzes the first and rate limiting step in this pathway which is the desaturation of LA (18:2n-6) and ALA (18:3n-3) into gamma-linoleate (GLA) (18:3n-6) and stearidonate (18:4n-3), respectively. Subsequently, in the biosynthetic pathway of HUFA n-3 series, it desaturates tetracosapentaenoate (24:5n-3) to tetracosahexaenoate (24:6n-3), which is then converted to docosahexaenoate (DHA)(22:6n-3), an important lipid for nervous system function. It can also desaturate (11E)-octadecenoate (trans-vaccenoate) at carbon 6 generating (6Z,11E)-octadecadienoate. In addition to Delta-6 activity, this enzyme exhibits Delta-8 activity with slight biases toward n-3 fatty acyl-CoA substrates. The chain is Acyl-CoA 6-desaturase from Mus musculus (Mouse).